The sequence spans 105 residues: POU domain, class 3, transcription factor 3 (105 aa).

Residues 1–49 enclose the POU-specific domain; it reads QADVGLALGTLYGNVFSQTTICRFEALQLSFKNMCKLKPLLNKWLEEAD. A DNA-binding region (homeobox) is located at residues 67 to 105; it reads KRKKRTSIEVSVKGALESHFLKCPKPAAQEITTLADSLQ.

This sequence belongs to the POU transcription factor family. Class-3 subfamily.

Its subcellular location is the nucleus. The chain is POU domain, class 3, transcription factor 3 (pou3f3) from Xenopus laevis (African clawed frog).